The sequence spans 283 residues: Ribosomal RNA small subunit methyltransferase H (283 aa).

S-adenosyl-L-methionine-binding positions include 31–33 (GGH), Asp-50, Phe-77, Asp-93, and Gln-100.

It belongs to the methyltransferase superfamily. RsmH family.

It localises to the cytoplasm. The enzyme catalyses cytidine(1402) in 16S rRNA + S-adenosyl-L-methionine = N(4)-methylcytidine(1402) in 16S rRNA + S-adenosyl-L-homocysteine + H(+). Specifically methylates the N4 position of cytidine in position 1402 (C1402) of 16S rRNA. This chain is Ribosomal RNA small subunit methyltransferase H, found in Trichodesmium erythraeum (strain IMS101).